Here is a 467-residue protein sequence, read N- to C-terminus: MVLAFQLVSFTYIWIILKPNVCAASNIKMTHQRCSSSMKQTCKQETRMKKDDSTKARPQKYEQLLHIEDNDFAMRPGFGGSPVPVGIDVHVESIDSISETNMDFTMTFYLRHYWKDERLSFPSTANKSMTFDHRLTRKIWVPDIFFVHSKRSFIHDTTMENIMLRVHPDGNVLLSLRITVSAMCFMDFSRFPLDTQNCSLELESYAYNEDDLMLYWKHGNKSLNTEEHMSLSQFFIEDFSASSGLAFYSSTGWYNRLFINFVLRRHVFFFVLQTYFPAILMVMLSWVSFWIDRRAVPARVSLGITTVLTMSTIITAVSASMPQVSYLKAVDVYLWVSSLFVFLSVIEYAAVNYLTTVEERKQFKKTGKISRMYNIDAVQAMAFDGCYHDSEIDMDQTSLSLNSEDFMRRKSICSPSTDSSRIKRRKSLGGHVGRIILENNHVIDTYSRILFPIVYILFNLFYWGVYV.

Positions 1 to 24 (MVLAFQLVSFTYIWIILKPNVCAA) are cleaved as a signal peptide. At 25–266 (SNIKMTHQRC…LFINFVLRRH (242 aa)) the chain is on the extracellular side. Positions 111 and 175 each coordinate 4-aminobutanoate. Residues Cys-184 and Cys-198 are joined by a disulfide bond. Glu-203 is a binding site for 4-aminobutanoate. Residue Asn-220 is glycosylated (N-linked (GlcNAc...) asparagine). Residues 267–287 (VFFFVLQTYFPAILMVMLSWV) form a helical membrane-spanning segment. At 288–299 (SFWIDRRAVPAR) the chain is on the cytoplasmic side. A helical membrane pass occupies residues 300–320 (VSLGITTVLTMSTIITAVSAS). The Extracellular portion of the chain corresponds to 321–331 (MPQVSYLKAVD). Residues 332 to 352 (VYLWVSSLFVFLSVIEYAAVN) form a helical membrane-spanning segment. Residues 347–448 (EYAAVNYLTT…NNHVIDTYSR (102 aa)) are interaction with SQSTM1. The Cytoplasmic portion of the chain corresponds to 353-446 (YLTTVEERKQ…LENNHVIDTY (94 aa)). The helical transmembrane segment at 447 to 467 (SRILFPIVYILFNLFYWGVYV) threads the bilayer.

The protein belongs to the ligand-gated ion channel (TC 1.A.9) family. Gamma-aminobutyric acid receptor (TC 1.A.9.5) subfamily. GABRR3 sub-subfamily. Three rho subunits (rho-1/GBRR1, rho-2/GBRR2 and rho-3/GBRR3) coassemble either to form functional homopentamers or heteropentamers. Forms a ternary complex with SQSTM1 and PRKCZ.

The protein localises to the postsynaptic cell membrane. Its subcellular location is the cell membrane. It carries out the reaction chloride(in) = chloride(out). Inhibited by TPMPA, a rho-specific antagonist, when forming a homopentamer. Its function is as follows. Rho subunit of the pentameric ligand-gated chloride channels responsible for mediating the effects of gamma-aminobutyric acid (GABA), the major inhibitory neurotransmitter in the brain. Rho-containing GABA-gated chloride channels are a subclass of GABA(A) receptors (GABAARs) entirely composed of rho subunits, where GABA molecules bind at the rho intersubunit interfaces. When activated by GABA, rho-GABAARs selectively allow the flow of chloride anions across the cell membrane down their electrochemical gradient. The protein is Gamma-aminobutyric acid receptor subunit rho-3 of Homo sapiens (Human).